A 666-amino-acid chain; its full sequence is Frizzled-3 (666 aa).

Positions 1 to 22 (MAMTWIVFSLWPLTVFMGHIGG) are cleaved as a signal peptide. The region spanning 23–136 (HSLFSCEPIT…CSRFPDCDEP (114 aa)) is the FZ domain. At 23–205 (HSLFSCEPIT…REELSFARYF (183 aa)) the chain is on the extracellular side. Cystine bridges form between Cys-28–Cys-89, Cys-36–Cys-82, Cys-73–Cys-110, Cys-99–Cys-133, and Cys-103–Cys-127. Residue Asn-42 is glycosylated (N-linked (GlcNAc...) asparagine). The chain crosses the membrane as a helical span at residues 206–226 (IGLISIICLSATLFTFLTFLI). Over 227–237 (DVTRFRYPERP) the chain is Cytoplasmic. The chain crosses the membrane as a helical span at residues 238–258 (IIFYAVCYMMVSLIFFIGFLL). The Extracellular segment spans residues 259–288 (EDRVACNASIPAQYKASTVTQGSHNKACTM). N-linked (GlcNAc...) asparagine glycosylation is present at Asn-265. The helical transmembrane segment at 289-309 (LFMILYFFTMAGSVWWVILTI) threads the bilayer. Residues 310–328 (TWFLAAVPKWGSEAIEKKA) lie on the Cytoplasmic side of the membrane. A helical membrane pass occupies residues 329–349 (LLFHASAWGIPGTLTIILLAM). At 350–374 (NKIEGDNISGVCFVGLYDVDALRYF) the chain is on the extracellular side. An N-linked (GlcNAc...) asparagine glycan is attached at Asn-356. The chain crosses the membrane as a helical span at residues 375 to 395 (VLAPLCLYVVVGVSLLLAGII). Residues 396–420 (SLNRVRIEIPLEKENQDKLVKFMIR) are Cytoplasmic-facing. A helical transmembrane segment spans residues 421-441 (IGVFSILYLVPLLVVIGCYFY). At 442-477 (EQAYRGIWETTWIQERCREYHIPCPYQVTQMSRPDL) the chain is on the extracellular side. Residues 478-498 (ILFLMKYLMALIVGIPSVFWV) form a helical membrane-spanning segment. At 499 to 666 (GSKKTCFEWA…RVIEEDGTSA (168 aa)) the chain is on the cytoplasmic side. Residues 502 to 507 (KTCFEW) carry the Lys-Thr-X-X-X-Trp motif, mediates interaction with the PDZ domain of Dvl family members motif. The tract at residues 538–666 (RDPNTPIIRK…RVIEEDGTSA (129 aa)) is disordered. The span at 550–565 (GTSTQGTSTHASSTQL) shows a compositional bias: polar residues. Basic and acidic residues predominate over residues 617–638 (LTDHSRHSSSHRLNEQSRHSSI). Polar residues predominate over residues 639–656 (RDLSNNPMTHITHGTSMN).

Belongs to the G-protein coupled receptor Fz/Smo family. As to quaternary structure, interacts with VANGL2. In terms of processing, ubiquitinated by ZNRF3, leading to its degradation by the proteasome. In terms of tissue distribution, widely expressed. Relatively high expression in the CNS, including regions of the limbic system, in kidney, pancreas, skeletal muscle, uterus and testis.

Its subcellular location is the membrane. It localises to the cell membrane. It is found in the cell surface. The protein resides in the apical cell membrane. Its function is as follows. Receptor for Wnt proteins. Most of frizzled receptors are coupled to the beta-catenin canonical signaling pathway, which leads to the activation of disheveled proteins, inhibition of GSK-3 kinase, nuclear accumulation of beta-catenin and activation of Wnt target genes. A second signaling pathway involving PKC and calcium fluxes has been seen for some family members, but it is not yet clear if it represents a distinct pathway or if it can be integrated in the canonical pathway, as PKC seems to be required for Wnt-mediated inactivation of GSK-3 kinase. Both pathways seem to involve interactions with G-proteins. Activation by Wnt5A stimulates PKC activity via a G-protein-dependent mechanism. Involved in transduction and intercellular transmission of polarity information during tissue morphogenesis and/or in differentiated tissues. Plays a role in controlling early axon growth and guidance processes necessary for the formation of a subset of central and peripheral major fiber tracts. Required for the development of major fiber tracts in the central nervous system, including: the anterior commissure, the corpus callosum, the thalamocortical, corticothalamic and nigrostriatal tracts, the corticospinal tract, the fasciculus retroflexus, the mammillothalamic tract, the medial lemniscus, and ascending fiber tracts from the spinal cord to the brain. In the peripheral nervous system, controls axon growth in distinct populations of cranial and spinal motor neurons, including the facial branchimotor nerve, the hypoglossal nerve, the phrenic nerve, and motor nerves innervating dorsal limbs. Involved in the migration of cranial neural crest cells. May also be implicated in the transmission of sensory information from the trunk and limbs to the brain. Controls commissural sensory axons guidance after midline crossing along the anterior-posterior axis in the developing spinal cord in a Wnt-dependent signaling pathway. Together with FZD6, is involved in the neural tube closure and plays a role in the regulation of the establishment of planar cell polarity (PCP), particularly in the orientation of asymmetric bundles of stereocilia on the apical faces of a subset of auditory and vestibular sensory cells located in the inner ear. Promotes neurogenesis by maintaining sympathetic neuroblasts within the cell cycle in a beta-catenin-dependent manner. The sequence is that of Frizzled-3 (FZD3) from Homo sapiens (Human).